Here is a 141-residue protein sequence, read N- to C-terminus: Ribonuclease P protein component (141 aa).

This sequence belongs to the RnpA family. As to quaternary structure, consists of a catalytic RNA component (M1 or rnpB) and a protein subunit.

The catalysed reaction is Endonucleolytic cleavage of RNA, removing 5'-extranucleotides from tRNA precursor.. RNaseP catalyzes the removal of the 5'-leader sequence from pre-tRNA to produce the mature 5'-terminus. It can also cleave other RNA substrates such as 4.5S RNA. The protein component plays an auxiliary but essential role in vivo by binding to the 5'-leader sequence and broadening the substrate specificity of the ribozyme. The chain is Ribonuclease P protein component from Onion yellows phytoplasma (strain OY-M).